The primary structure comprises 563 residues: Bifunctional dihydrofolate reductase-thymidylate synthase (563 aa).

In terms of domain architecture, DHFR spans 3–195; sequence KFNIIAAINN…ILLRFQEYSV (193 aa). 117 to 124 provides a ligand contact to NADP(+); sequence GGGVIYDL. Residues 275–563 form a thymidylate synthase region; the sequence is YIELVKTIME…CPSISAEMIA (289 aa). Arg292 contributes to the dUMP binding site. Cys435 is an active-site residue. DUMP is bound by residues His436, 464–468, Asn474, and 504–506; these read QRSWD and HIY.

The protein in the N-terminal section; belongs to the dihydrofolate reductase family. This sequence in the C-terminal section; belongs to the thymidylate synthase family.

The catalysed reaction is (6S)-5,6,7,8-tetrahydrofolate + NADP(+) = 7,8-dihydrofolate + NADPH + H(+). The enzyme catalyses dUMP + (6R)-5,10-methylene-5,6,7,8-tetrahydrofolate = 7,8-dihydrofolate + dTMP. It functions in the pathway cofactor biosynthesis; tetrahydrofolate biosynthesis; 5,6,7,8-tetrahydrofolate from 7,8-dihydrofolate: step 1/1. Functionally, bifunctional enzyme. Involved in de novo dTMP biosynthesis. Key enzyme in folate metabolism. Catalyzes an essential reaction for de novo glycine and purine synthesis, DNA precursor synthesis, and for the conversion of dUMP to dTMP. This is Bifunctional dihydrofolate reductase-thymidylate synthase from Acanthamoeba polyphaga mimivirus (APMV).